A 170-amino-acid chain; its full sequence is Peptide deformylase (170 aa).

The Fe cation site is built by Cys-94 and His-136. Glu-137 is an active-site residue. Residue His-140 participates in Fe cation binding.

Belongs to the polypeptide deformylase family. The cofactor is Fe(2+).

It carries out the reaction N-terminal N-formyl-L-methionyl-[peptide] + H2O = N-terminal L-methionyl-[peptide] + formate. Its function is as follows. Removes the formyl group from the N-terminal Met of newly synthesized proteins. Requires at least a dipeptide for an efficient rate of reaction. N-terminal L-methionine is a prerequisite for activity but the enzyme has broad specificity at other positions. This is Peptide deformylase from Xylella fastidiosa (strain M12).